Reading from the N-terminus, the 507-residue chain is Putative F-box/LRR-repeat protein At4g00320 (507 aa).

Residues 12 to 60 form the F-box domain; the sequence is RDGISGLPDAMICHILSFLPTKVAASTTVLAKRWKPLLAFMPNLDFDES. LRR repeat units follow at residues 135–163, 187–212, 214–240, 317–348, and 349–374; these read RGFG…KIQF, YVKM…LLMN, IWKE…KFSR, ILYL…TIRT, and GVHI…VFEG.

The sequence is that of Putative F-box/LRR-repeat protein At4g00320 from Arabidopsis thaliana (Mouse-ear cress).